Reading from the N-terminus, the 205-residue chain is SREBP regulating gene protein (205 aa).

Topologically, residues 1 to 16 (MVNLAAMVWRRLLRKR) are cytoplasmic. Residues 17–35 (WVLALVFGLSLVYFLSSTF) traverse the membrane as a helical segment. Over 36–205 (KQEERAVRDR…GESPPELFPA (170 aa)) the chain is Lumenal. Residue Asn67 is glycosylated (N-linked (GlcNAc...) asparagine).

The protein belongs to the SPRING family. In terms of assembly, interacts with SCAP.

The protein resides in the golgi apparatus membrane. Functionally, positively regulates hepatic SREBP signaling pathway by modulating the proper localization of SCAP (SREBP cleavage-activating protein) to the endoplasmic reticulum, thereby controlling the level of functional SCAP. This is SREBP regulating gene protein from Homo sapiens (Human).